A 183-amino-acid polypeptide reads, in one-letter code: ATP-dependent protease subunit HslV (183 aa).

Residue T13 is part of the active site. G168, C171, and T174 together coordinate Na(+).

The protein belongs to the peptidase T1B family. HslV subfamily. In terms of assembly, a double ring-shaped homohexamer of HslV is capped on each side by a ring-shaped HslU homohexamer. The assembly of the HslU/HslV complex is dependent on binding of ATP.

It is found in the cytoplasm. The enzyme catalyses ATP-dependent cleavage of peptide bonds with broad specificity.. Its activity is regulated as follows. Allosterically activated by HslU binding. Its function is as follows. Protease subunit of a proteasome-like degradation complex believed to be a general protein degrading machinery. This is ATP-dependent protease subunit HslV from Xanthomonas euvesicatoria pv. vesicatoria (strain 85-10) (Xanthomonas campestris pv. vesicatoria).